The sequence spans 664 residues: Semaphorin-7A (664 aa).

The N-terminal stretch at 1–44 (MTPPPPGRAAPSAPRARVLSLPARFGLPLRLRLLLVFWVAAASA) is a signal peptide. The Sema domain maps to 53–488 (RISAVWKGQD…SQWEVSQVPL (436 aa)). Asn102 carries an N-linked (GlcNAc...) asparagine glycan. Cys117 and Cys123 are disulfide-bonded. Arg132 bears the Asymmetric dimethylarginine mark. A disulfide bridge connects residues Cys140 and Cys149. N-linked (GlcNAc...) asparagine glycans are attached at residues Asn154 and Asn256. Intrachain disulfides connect Cys264–Cys364, Cys289–Cys333, Cys491–Cys509, Cys498–Cys539, Cys501–Cys516, Cys564–Cys611, and Cys585–Cys594. The tract at residues 265–267 (RGD) is interaction with integrins. Residues 265–267 (RGD) carry the Cell attachment site motif. Residue Asn328 is glycosylated (N-linked (GlcNAc...) asparagine). The region spanning 542–627 (PKPDEAPLQK…YLREAQHWEL (86 aa)) is the Ig-like C2-type domain. N-linked (GlcNAc...) asparagine glycosylation occurs at Asn600. A lipid anchor (GPI-anchor amidated alanine) is attached at Ala646. Residues 647–664 (ASFWLGVLPTLILGLLVH) constitute a propeptide, removed in mature form.

The protein belongs to the semaphorin family. As to quaternary structure, interacts with PLXNC1. Interacts with ITGA1 and ITGB1. As to expression, highly expressed in activated T-cells (at protein level). Highest expression in brain. Lower in heart, thymus, spleen, testis and ovary. The expression increases in late embryonic and postnatal stages. Detected in T-cells.

Its subcellular location is the cell membrane. Plays an important role in integrin-mediated signaling and functions both in regulating cell migration and immune responses. Promotes formation of focal adhesion complexes, activation of the protein kinase PTK2/FAK1 and subsequent phosphorylation of MAPK1 and MAPK3. Promotes production of pro-inflammatory cytokines by monocytes and macrophages. Plays an important role in modulating inflammation and T-cell-mediated immune responses. Promotes axon growth in the embryonic olfactory bulb. Promotes attachment, spreading and dendrite outgrowth in melanocytes. This is Semaphorin-7A (Sema7a) from Mus musculus (Mouse).